Reading from the N-terminus, the 371-residue chain is tRNA-specific 2-thiouridylase MnmA (371 aa).

ATP contacts are provided by residues 22-29 (GLSGGVDS) and Met48. The segment at 108-110 (NPD) is interaction with target base in tRNA. Cys113 acts as the Nucleophile in catalysis. An intrachain disulfide couples Cys113 to Cys209. Residue Gly137 coordinates ATP. The interaction with tRNA stretch occupies residues 159–161 (KDQ). Residue Cys209 is the Cysteine persulfide intermediate of the active site.

This sequence belongs to the MnmA/TRMU family.

It localises to the cytoplasm. The catalysed reaction is S-sulfanyl-L-cysteinyl-[protein] + uridine(34) in tRNA + AH2 + ATP = 2-thiouridine(34) in tRNA + L-cysteinyl-[protein] + A + AMP + diphosphate + H(+). In terms of biological role, catalyzes the 2-thiolation of uridine at the wobble position (U34) of tRNA, leading to the formation of s(2)U34. In Coxiella burnetii (strain CbuK_Q154) (Coxiella burnetii (strain Q154)), this protein is tRNA-specific 2-thiouridylase MnmA.